The chain runs to 204 residues: Large ribosomal subunit protein eL15 (204 aa).

This sequence belongs to the eukaryotic ribosomal protein eL15 family. In terms of assembly, component of the large ribosomal subunit.

It is found in the cytoplasm. Component of the large ribosomal subunit. The ribosome is a large ribonucleoprotein complex responsible for the synthesis of proteins in the cell. In Anguilla japonica (Japanese eel), this protein is Large ribosomal subunit protein eL15 (rpl15).